Reading from the N-terminus, the 227-residue chain is Cytochrome c oxidase subunit 2 (227 aa).

Topologically, residues methionine 1–serine 14 are mitochondrial intermembrane. Residues proline 15–methionine 45 traverse the membrane as a helical segment. Topologically, residues leucine 46–glutamine 59 are mitochondrial matrix. Residues glutamate 60–methionine 87 form a helical membrane-spanning segment. Topologically, residues aspartate 88–isoleucine 227 are mitochondrial intermembrane. Cu cation is bound by residues histidine 161, cysteine 196, glutamate 198, cysteine 200, histidine 204, and methionine 207. Position 198 (glutamate 198) interacts with Mg(2+).

Belongs to the cytochrome c oxidase subunit 2 family. In terms of assembly, component of the cytochrome c oxidase (complex IV, CIV), a multisubunit enzyme composed of 14 subunits. The complex is composed of a catalytic core of 3 subunits MT-CO1, MT-CO2 and MT-CO3, encoded in the mitochondrial DNA, and 11 supernumerary subunits COX4I, COX5A, COX5B, COX6A, COX6B, COX6C, COX7A, COX7B, COX7C, COX8 and NDUFA4, which are encoded in the nuclear genome. The complex exists as a monomer or a dimer and forms supercomplexes (SCs) in the inner mitochondrial membrane with NADH-ubiquinone oxidoreductase (complex I, CI) and ubiquinol-cytochrome c oxidoreductase (cytochrome b-c1 complex, complex III, CIII), resulting in different assemblies (supercomplex SCI(1)III(2)IV(1) and megacomplex MCI(2)III(2)IV(2)). Found in a complex with TMEM177, COA6, COX18, COX20, SCO1 and SCO2. Interacts with TMEM177 in a COX20-dependent manner. Interacts with COX20. Interacts with COX16. Cu cation serves as cofactor.

Its subcellular location is the mitochondrion inner membrane. It catalyses the reaction 4 Fe(II)-[cytochrome c] + O2 + 8 H(+)(in) = 4 Fe(III)-[cytochrome c] + 2 H2O + 4 H(+)(out). Component of the cytochrome c oxidase, the last enzyme in the mitochondrial electron transport chain which drives oxidative phosphorylation. The respiratory chain contains 3 multisubunit complexes succinate dehydrogenase (complex II, CII), ubiquinol-cytochrome c oxidoreductase (cytochrome b-c1 complex, complex III, CIII) and cytochrome c oxidase (complex IV, CIV), that cooperate to transfer electrons derived from NADH and succinate to molecular oxygen, creating an electrochemical gradient over the inner membrane that drives transmembrane transport and the ATP synthase. Cytochrome c oxidase is the component of the respiratory chain that catalyzes the reduction of oxygen to water. Electrons originating from reduced cytochrome c in the intermembrane space (IMS) are transferred via the dinuclear copper A center (CU(A)) of subunit 2 and heme A of subunit 1 to the active site in subunit 1, a binuclear center (BNC) formed by heme A3 and copper B (CU(B)). The BNC reduces molecular oxygen to 2 water molecules using 4 electrons from cytochrome c in the IMS and 4 protons from the mitochondrial matrix. The sequence is that of Cytochrome c oxidase subunit 2 (MT-CO2) from Malacothrix typica (Long-eared mouse).